Consider the following 65-residue polypeptide: Small ribosomal subunit protein eS31 (65 aa).

Residues cysteine 36, cysteine 39, cysteine 55, and cysteine 58 each contribute to the Zn(2+) site. The C4-type zinc finger occupies 36–58; that stretch reads CPKCGSVMAFHREPVPRWHCGKC.

Belongs to the eukaryotic ribosomal protein eS31 family. In terms of assembly, part of the 30S ribosomal subunit. The cofactor is Zn(2+).

This Pyrobaculum calidifontis (strain DSM 21063 / JCM 11548 / VA1) protein is Small ribosomal subunit protein eS31.